The primary structure comprises 277 residues: 4-hydroxy-3-methylbut-2-enyl diphosphate reductase (277 aa).

Residue Cys12 participates in [4Fe-4S] cluster binding. His36 and His70 together coordinate (2E)-4-hydroxy-3-methylbut-2-enyl diphosphate. Dimethylallyl diphosphate is bound by residues His36 and His70. Positions 36 and 70 each coordinate isopentenyl diphosphate. Cys92 is a binding site for [4Fe-4S] cluster. His120 is a (2E)-4-hydroxy-3-methylbut-2-enyl diphosphate binding site. Position 120 (His120) interacts with dimethylallyl diphosphate. His120 is an isopentenyl diphosphate binding site. Residue Glu122 is the Proton donor of the active site. Position 158 (Thr158) interacts with (2E)-4-hydroxy-3-methylbut-2-enyl diphosphate. Cys186 contacts [4Fe-4S] cluster. Ser214, Asn216, and Ser258 together coordinate (2E)-4-hydroxy-3-methylbut-2-enyl diphosphate. 3 residues coordinate dimethylallyl diphosphate: Ser214, Asn216, and Ser258. The isopentenyl diphosphate site is built by Ser214, Asn216, and Ser258.

This sequence belongs to the IspH family. Requires [4Fe-4S] cluster as cofactor.

It carries out the reaction isopentenyl diphosphate + 2 oxidized [2Fe-2S]-[ferredoxin] + H2O = (2E)-4-hydroxy-3-methylbut-2-enyl diphosphate + 2 reduced [2Fe-2S]-[ferredoxin] + 2 H(+). The catalysed reaction is dimethylallyl diphosphate + 2 oxidized [2Fe-2S]-[ferredoxin] + H2O = (2E)-4-hydroxy-3-methylbut-2-enyl diphosphate + 2 reduced [2Fe-2S]-[ferredoxin] + 2 H(+). The protein operates within isoprenoid biosynthesis; dimethylallyl diphosphate biosynthesis; dimethylallyl diphosphate from (2E)-4-hydroxy-3-methylbutenyl diphosphate: step 1/1. It participates in isoprenoid biosynthesis; isopentenyl diphosphate biosynthesis via DXP pathway; isopentenyl diphosphate from 1-deoxy-D-xylulose 5-phosphate: step 6/6. In terms of biological role, catalyzes the conversion of 1-hydroxy-2-methyl-2-(E)-butenyl 4-diphosphate (HMBPP) into a mixture of isopentenyl diphosphate (IPP) and dimethylallyl diphosphate (DMAPP). Acts in the terminal step of the DOXP/MEP pathway for isoprenoid precursor biosynthesis. In Campylobacter jejuni subsp. jejuni serotype O:6 (strain 81116 / NCTC 11828), this protein is 4-hydroxy-3-methylbut-2-enyl diphosphate reductase.